Reading from the N-terminus, the 198-residue chain is Putative pseudouridine methyltransferase (198 aa).

Positions 132 and 186 each coordinate S-adenosyl-L-methionine.

Belongs to the methyltransferase superfamily. TrmY family.

The protein resides in the cytoplasm. The polypeptide is Putative pseudouridine methyltransferase (Shewanella frigidimarina (strain NCIMB 400)).